The following is a 35-amino-acid chain: Cecropin-A (35 aa).

At Leu35 the chain carries Leucine amide.

As to quaternary structure, monomer. As to expression, hemolymph.

The protein resides in the secreted. Functionally, cecropins have lytic and antibacterial activity against several Gram-positive and Gram-negative bacteria. Also has activity against fungi. The sequence is that of Cecropin-A from Heliothis virescens (Tobacco budworm moth).